The chain runs to 283 residues: Phosphatidylserine decarboxylase proenzyme (283 aa).

Catalysis depends on charge relay system; for autoendoproteolytic cleavage activity residues aspartate 88, histidine 145, and serine 248. The active-site Schiff-base intermediate with substrate; via pyruvic acid; for decarboxylase activity is the serine 248. Serine 248 is modified (pyruvic acid (Ser); by autocatalysis).

The protein belongs to the phosphatidylserine decarboxylase family. PSD-B subfamily. Prokaryotic type I sub-subfamily. As to quaternary structure, heterodimer of a large membrane-associated beta subunit and a small pyruvoyl-containing alpha subunit. Pyruvate serves as cofactor. In terms of processing, is synthesized initially as an inactive proenzyme. Formation of the active enzyme involves a self-maturation process in which the active site pyruvoyl group is generated from an internal serine residue via an autocatalytic post-translational modification. Two non-identical subunits are generated from the proenzyme in this reaction, and the pyruvate is formed at the N-terminus of the alpha chain, which is derived from the carboxyl end of the proenzyme. The autoendoproteolytic cleavage occurs by a canonical serine protease mechanism, in which the side chain hydroxyl group of the serine supplies its oxygen atom to form the C-terminus of the beta chain, while the remainder of the serine residue undergoes an oxidative deamination to produce ammonia and the pyruvoyl prosthetic group on the alpha chain. During this reaction, the Ser that is part of the protease active site of the proenzyme becomes the pyruvoyl prosthetic group, which constitutes an essential element of the active site of the mature decarboxylase.

The protein localises to the cell membrane. It catalyses the reaction a 1,2-diacyl-sn-glycero-3-phospho-L-serine + H(+) = a 1,2-diacyl-sn-glycero-3-phosphoethanolamine + CO2. The protein operates within phospholipid metabolism; phosphatidylethanolamine biosynthesis; phosphatidylethanolamine from CDP-diacylglycerol: step 2/2. Catalyzes the formation of phosphatidylethanolamine (PtdEtn) from phosphatidylserine (PtdSer). The sequence is that of Phosphatidylserine decarboxylase proenzyme from Methylibium petroleiphilum (strain ATCC BAA-1232 / LMG 22953 / PM1).